The primary structure comprises 207 residues: MSRYRGPRLRIIRRLRNLPGLTNKLVESKKNQASGSDQSNQKKVSQYCIRLEAKQRLRFNYGLTERQLLNYVRIARCAKGSTGQILLQLLEMRLDNILFRLGVVPTIPSARQLINHRHILVNNRIVDIPSFHCKPKDIITIGAPKTYQSIITKRIEAFAKDQIPDHLTLSLSEPKKPKGFVNYLINRESIGLKINELLVVEYYSRKA.

Positions 92-156 (MRLDNILFRL…YQSIITKRIE (65 aa)) constitute an S4 RNA-binding domain.

Belongs to the universal ribosomal protein uS4 family. As to quaternary structure, part of the 30S ribosomal subunit. Contacts protein S5. The interaction surface between S4 and S5 is involved in control of translational fidelity.

The protein localises to the plastid. The protein resides in the chloroplast. Its function is as follows. One of the primary rRNA binding proteins, it binds directly to 16S rRNA where it nucleates assembly of the body of the 30S subunit. Functionally, with S5 and S12 plays an important role in translational accuracy. This chain is Small ribosomal subunit protein uS4c (rps4), found in Equisetum sylvaticum (Wood horsetail).